A 421-amino-acid polypeptide reads, in one-letter code: L-evernosamine nitrososynthase (421 aa).

Belongs to the acyl-CoA dehydrogenase family. As to quaternary structure, homotetramer. The cofactor is FAD.

It carries out the reaction dTDP-beta-L-evernosamine + 2 NADPH + 2 O2 + H(+) = dTDP-2,3,6-trideoxy-3-C-methyl-4-O-methyl-3-nitroso-beta-L-arabino-hexopyranose + 2 NADP(+) + 3 H2O. It catalyses the reaction dTDP-beta-L-evernosamine + NADPH + O2 = dTDP-N-hydroxy-beta-L-evernosamine + NADP(+) + H2O. The catalysed reaction is dTDP-N-hydroxy-beta-L-evernosamine + NADPH + O2 + H(+) = dTDP-2,3,6-trideoxy-3-C-methyl-4-O-methyl-3-nitroso-beta-L-arabino-hexopyranose + NADP(+) + 2 H2O. The protein operates within antibiotic biosynthesis. Nitrososynthase involved in the biosynthesis of everninomicin, a broad spectrum orthosomycin antibiotic. Catalyzes the double-oxidation of TDP-L-evernosamine to TDP-L-evernitrosose. The enzyme first oxidizes the substrate to a transient hydroxylamino intermediate, which is then further oxidized to nitroso sugar. The nitroso group is probably spontaneously oxidized giving TDP-L-evernitrose. In vitro, catalyzes the double-oxidation of TDP-L-epi-vancosamine to TDP-L-epi-vancosonitrose. Can also use biosynthetic progenitors of TDP-L-epi-vancosamine, but progenitors solely undergo single-oxidation reactions and terminate in the hydroxylamine oxidation state. The protein is L-evernosamine nitrososynthase of Micromonospora sp. (strain ATCC 39149 / NRRL 15099 / SCC 1413).